We begin with the raw amino-acid sequence, 414 residues long: Putative ankyrin repeat protein BB_B28 (414 aa).

ANK repeat units lie at residues 326-355 and 359-389; these read NGNPIFTYAINVKAKSIINYLITKEFNINL and NSQTALHSAIIQKYDLNFIKSLIEKGANPNI.

This is Putative ankyrin repeat protein BB_B28 from Borreliella burgdorferi (strain ATCC 35210 / DSM 4680 / CIP 102532 / B31) (Borrelia burgdorferi).